The sequence spans 185 residues: MLNEIKAKTKERMLKTIQSFHDDIKGVRTGRASASLLDGIVVNIYGGHQKLNQVAGVSVIDNKTLSIKVWDISVVGEVKNAILNANLNLNPVVEGSTIRIALPDLTQETREKLVKLLHQFAENARIAIRNIRRDIMEETEKMKENKEISEDDFHGAKKEIQNITDDNIKKIDGELSIKEKDILNH.

Belongs to the RRF family.

Its subcellular location is the cytoplasm. In terms of biological role, responsible for the release of ribosomes from messenger RNA at the termination of protein biosynthesis. May increase the efficiency of translation by recycling ribosomes from one round of translation to another. The chain is Ribosome-recycling factor from Wolbachia pipientis wMel.